We begin with the raw amino-acid sequence, 804 residues long: Phenylalanine--tRNA ligase beta subunit (804 aa).

The tRNA-binding domain maps to 40-155; the sequence is DRGMKGVVIG…SDAPIGADAI (116 aa). Residues 409 to 484 enclose the B5 domain; sequence QDSVVVTVTL…RLYGYDRLPA (76 aa). 4 residues coordinate Mg(2+): aspartate 462, aspartate 468, glutamate 471, and glutamate 472. The FDX-ACB domain maps to 710–803; that stretch reads PRFPSVVRDI…VEKQFGAVLR (94 aa).

It belongs to the phenylalanyl-tRNA synthetase beta subunit family. Type 1 subfamily. Tetramer of two alpha and two beta subunits. Requires Mg(2+) as cofactor.

It localises to the cytoplasm. It carries out the reaction tRNA(Phe) + L-phenylalanine + ATP = L-phenylalanyl-tRNA(Phe) + AMP + diphosphate + H(+). The protein is Phenylalanine--tRNA ligase beta subunit of Geobacillus kaustophilus (strain HTA426).